The primary structure comprises 2345 residues: Acetyl-CoA carboxylase 1 (2345 aa).

Methionine 1 bears the N-acetylmethionine mark. Phosphoserine is present on residues serine 5, serine 23, serine 25, serine 29, serine 34, serine 47, serine 49, and serine 52. Threonine 57 carries the post-translational modification Phosphothreonine. The residue at position 77 (serine 77) is a Phosphoserine. Serine 79 carries the phosphoserine; by AMPK modification. Residues 116 to 617 enclose the Biotin carboxylation domain; sequence VIEKVLIANN…DTGWLDRLIA (502 aa). One can recognise an ATP-grasp domain in the interval 274-465; that stretch reads SKRILNVPQD…LPAAQLQIAM (192 aa). Residue 314–319 coordinates ATP; that stretch reads GGGGKG. Mg(2+) contacts are provided by glutamate 423, glutamate 436, and asparagine 438. The Mn(2+) site is built by glutamate 423, glutamate 436, and asparagine 438. Arginine 440 is an active-site residue. Threonine 609 is modified (phosphothreonine). In terms of domain architecture, Biotinyl-binding spans 744 to 818; it reads FEKENDPSVM…DPGCVIAKMQ (75 aa). Lysine 785 is modified (N6-biotinyllysine). Serine 834 is subject to Phosphoserine. Residues serine 1200 and serine 1215 each carry the phosphoserine; by AMPK; in vitro modification. Position 1217 is a phosphoserine (serine 1217). Threonine 1226 is subject to Phosphothreonine. Serine 1258, serine 1262, and serine 1272 each carry phosphoserine. The residue at position 1333 (lysine 1333) is an N6-acetyllysine. Residues 1575 to 1913 enclose the CoA carboxyltransferase N-terminal domain; that stretch reads PYVTKDLLQS…NVHSSVPLLN (339 aa). Positions 1575-2233 are carboxyltransferase; the sequence is PYVTKDLLQS…EDLVKKKIHS (659 aa). The CoA site is built by arginine 1822, lysine 2126, and arginine 2128. A CoA carboxyltransferase C-terminal domain is found at 1917–2233; it reads PIDRIIEFVP…EDLVKKKIHS (317 aa). Threonine 2152 carries the post-translational modification Phosphothreonine.

Monomer, homodimer, and homotetramer. Can form filamentous polymers. Interacts in its inactive phosphorylated form with the BRCT domains of BRCA1 which prevents ACACA dephosphorylation and inhibits lipid synthesis. Interacts with MID1IP1; interaction with MID1IP1 promotes oligomerization and increases its activity. Mg(2+) is required as a cofactor. The cofactor is Mn(2+). Biotin serves as cofactor. In terms of processing, the N-terminus is blocked. Post-translationally, phosphorylation on Ser-1262 is required for interaction with BRCA1. Phosphorylation at Ser-79 by AMPK inactivates enzyme activity. Phosphorylated in vitro at Ser-1200 and Ser-1215 by AMPK; the relevance of phosphorylation of these sites in vivo is however unclear. In terms of processing, the biotin cofactor is covalently attached to the central biotinyl-binding domain and is required for the catalytic activity.

The protein resides in the cytoplasm. Its subcellular location is the cytosol. It carries out the reaction hydrogencarbonate + acetyl-CoA + ATP = malonyl-CoA + ADP + phosphate + H(+). It functions in the pathway lipid metabolism; malonyl-CoA biosynthesis; malonyl-CoA from acetyl-CoA: step 1/1. Its activity is regulated as follows. Inhibited by phosphorylation. Citrate promotes oligomerization of the protein into filaments that correspond to the most active form of the carboxylase. Functionally, cytosolic enzyme that catalyzes the carboxylation of acetyl-CoA to malonyl-CoA, the first and rate-limiting step of de novo fatty acid biosynthesis. This is a 2 steps reaction starting with the ATP-dependent carboxylation of the biotin carried by the biotin carboxyl carrier (BCC) domain followed by the transfer of the carboxyl group from carboxylated biotin to acetyl-CoA. In Rattus norvegicus (Rat), this protein is Acetyl-CoA carboxylase 1.